Consider the following 201-residue polypeptide: MSKVLVLKSSILAGYSQSNQLSDYFVEQWREKHSADEITVRDLAANPIPVLDGELVGALRPSDAPLTPRQQEALALSDELIAELKAHDVIVIAAPMYNFNISTQLKNYFDLVARAGVTFRYTENGPEGLVTGKKAIVITSRGGIHKDGPTDLVTPYLSTFLGFIGITDVKFVFAEGIAYGPEMAAKAQSDAKAAIDSIVSA.

Residues serine 10, 16-18, 96-99, and 140-143 contribute to the FMN site; these read SQS, MYNF, and SRGG.

It belongs to the azoreductase type 1 family. In terms of assembly, homodimer. The cofactor is FMN.

It carries out the reaction 2 a quinone + NADH + H(+) = 2 a 1,4-benzosemiquinone + NAD(+). The enzyme catalyses N,N-dimethyl-1,4-phenylenediamine + anthranilate + 2 NAD(+) = 2-(4-dimethylaminophenyl)diazenylbenzoate + 2 NADH + 2 H(+). Its function is as follows. Quinone reductase that provides resistance to thiol-specific stress caused by electrophilic quinones. In terms of biological role, also exhibits azoreductase activity. Catalyzes the reductive cleavage of the azo bond in aromatic azo compounds to the corresponding amines. The chain is FMN-dependent NADH:quinone oxidoreductase from Escherichia coli O9:H4 (strain HS).